The sequence spans 66 residues: Jindongenin-1a (66 aa).

The N-terminal stretch at M1–C22 is a signal peptide. Residues E23–V40 constitute a propeptide that is removed on maturation. C60 and C66 are disulfide-bonded.

In terms of tissue distribution, expressed by the skin glands.

The protein resides in the secreted. Functionally, displays broad-spectrum antibacterial activity against a range of Gram-positive and Gram-negative bacteria. Also displays antifungal activity against C.albicans ATCC 2002. Has low hemolytic activity, low cytotoxicity and low antioxidant activity. In Amolops jingdongensis (Chinese torrent frog), this protein is Jindongenin-1a.